The primary structure comprises 101 residues: Small ribosomal subunit protein uS14 (101 aa).

Belongs to the universal ribosomal protein uS14 family. Part of the 30S ribosomal subunit. Contacts proteins S3 and S10.

Binds 16S rRNA, required for the assembly of 30S particles and may also be responsible for determining the conformation of the 16S rRNA at the A site. The chain is Small ribosomal subunit protein uS14 from Phenylobacterium zucineum (strain HLK1).